Consider the following 776-residue polypeptide: Microtubule-associated protein tau (776 aa).

Positions 1–26 are enriched in basic and acidic residues; the sequence is MAEPRQEFEVMEDHAGTYGLGDRKDQ. Residues 1-591 form a disordered region; sequence MAEPRQEFEV…PVPMPDLKNV (591 aa). At Ala-2 the chain carries N-acetylalanine. A phosphotyrosine mark is found at Tyr-18 and Tyr-29. Lys-44 participates in a covalent cross-link: Glycyl lysine isopeptide (Lys-Gly) (interchain with G-Cter in ubiquitin). Ser-46 and Ser-61 each carry phosphoserine. Over residues 61–71 the composition is skewed to polar residues; sequence SETSDAKSTPT. Phosphothreonine occurs at positions 69, 71, and 111. 2 stretches are compositionally biased toward basic and acidic residues: residues 179–189 and 207–216; these read EGGRHAPELLK and GGKERPGSKE. Ser-214 carries the post-translational modification Phosphoserine. Over residues 217 to 228 the composition is skewed to acidic residues; the sequence is EVDEDRDVDESS. 2 stretches are compositionally biased toward basic and acidic residues: residues 293–303 and 314–323; these read KGQDAHLEFTF and EQAHSEEHLG. A compositionally biased stretch (low complexity) spans 324–340; the sequence is RAAFPGAPGEGPEARGP. Basic and acidic residues-rich tracts occupy residues 344–356 and 381–393; these read EDTKEADLPEPSE and KSKDGTGSDDKKA. Over residues 440–452 the composition is skewed to polar residues; the sequence is KYVSSVTPRTGSS. Residues 455 to 466 are compositionally biased toward basic and acidic residues; it reads KEMKLKGADGKT. Thr-470 bears the Phosphothreonine mark. Arg-472 is subject to Omega-N-methylarginine. Lys-480 is modified (N6,N6-dimethyllysine; alternate). The residue at position 480 (Lys-480) is an N6-acetyllysine; alternate. 3 positions are modified to phosphothreonine: Thr-486, Thr-492, and Thr-498. Phosphoserine occurs at positions 502, 526, and 530. Residues 517-528 show a composition bias toward basic and acidic residues; it reads RSERGEPPKSGD. Positions 529-549 are enriched in low complexity; sequence RSGYSSPGSPGTPGSRSRTPS. Tyr-532 is subject to Phosphotyrosine. Ser-533, Ser-534, and Ser-537 each carry phosphoserine. Phosphothreonine is present on residues Thr-540 and Thr-547. Residue Ser-549 is modified to Phosphoserine. Residue Thr-552 is modified to Phosphothreonine. Lys-560 carries the post-translational modification N6-acetyllysine. Thr-566 is modified (phosphothreonine). Ser-570 and Ser-572 each carry phosphoserine. Tau/MAP repeat units lie at residues 579-609, 610-640, 641-671, and 672-703; these read QTAPVPMPDLKNVKSKIGSTENLKHQPGGGK, VQIINKKLDLSNVQSKCGSKDNIKHVPGGGS, VQIVYKPVDLSKVTSKCGSLGNIHHKPGGGQ, and VEVKSEKLDFKDRVQSKIGSLDNITHVPGGGN. Residue Lys-589 forms a Glycyl lysine isopeptide (Lys-Gly) (interchain with G-Cter in ubiquitin) linkage. Lys-594 is modified (N6-acetyllysine; alternate). Lys-594 is modified (N6-methyllysine; alternate). Residue Lys-594 forms a Glycyl lysine isopeptide (Lys-Gly) (interchain with G-Cter in ubiquitin); alternate linkage. Position 597 is a phosphoserine (Ser-597). A Glycyl lysine isopeptide (Lys-Gly) (interchain with G-Cter in ubiquitin) cross-link involves residue Lys-602. Lys-616 carries the N6-acetyllysine; alternate modification. A Glycyl lysine isopeptide (Lys-Gly) (interchain with G-Cter in ubiquitin); alternate cross-link involves residue Lys-616. Phosphoserine occurs at positions 620 and 624. Residue Lys-625 is modified to N6-acetyllysine. Phosphoserine is present on Ser-628. Lys-633 bears the N6-acetyllysine; alternate mark. Residue Lys-633 forms a Glycyl lysine isopeptide (Lys-Gly) (interchain with G-Cter in ubiquitin); alternate linkage. Ser-640 is modified (phosphoserine). An N6,N6-dimethyllysine; alternate modification is found at Lys-646. 3 positions are modified to N6-acetyllysine; alternate: Lys-646, Lys-652, and Lys-656. Residues Lys-646, Lys-652, and Lys-656 each participate in a glycyl lysine isopeptide (Lys-Gly) (interchain with G-Cter in ubiquitin); alternate cross-link. Phosphoserine is present on Ser-659. Residues Lys-666, Lys-678, and Lys-682 each carry the N6-acetyllysine; alternate modification. Glycyl lysine isopeptide (Lys-Gly) (interchain with G-Cter in ubiquitin); alternate cross-links involve residues Lys-666, Lys-678, and Lys-682. Arg-684 carries the post-translational modification Omega-N-methylarginine. Ser-687 carries the phosphoserine modification. A Glycyl lysine isopeptide (Lys-Gly) (interchain with G-Cter in ubiquitin) cross-link involves residue Lys-688. Ser-691 is modified (phosphoserine). Position 704 is an N6-acetyllysine; alternate (Lys-704). Lys-704 is covalently cross-linked (Glycyl lysine isopeptide (Lys-Gly) (interchain with G-Cter in ubiquitin); alternate). Residue Lys-710 forms a Glycyl lysine isopeptide (Lys-Gly) (interchain with G-Cter in ubiquitin) linkage. Lys-720 carries the N6-acetyllysine; alternate modification. Lys-720 is covalently cross-linked (Glycyl lysine isopeptide (Lys-Gly) (interchain with G-Cter in ubiquitin); alternate). Phosphotyrosine is present on Tyr-729. Residues Ser-731 and Ser-735 each carry the phosphoserine modification. The disordered stretch occupies residues 733–752; sequence VVSGDTSPRHLSNVSSTGSI. Positions 736 to 751 are enriched in polar residues; sequence GDTSPRHLSNVSSTGS. Phosphothreonine is present on Thr-738. Ser-739, Ser-744, Ser-751, and Ser-757 each carry phosphoserine. Thr-762 bears the Phosphothreonine mark.

In terms of assembly, interacts with MARK1, MARK2, MARK3 and MARK4. Interacts with SQSTM1 when polyubiquitinated. Interacts with PSMC2 through SQSTM1. Interacts with FKBP4. Binds to CSNK1D. Interacts with SGK1. Interacts with EPM2A; the interaction dephosphorylates MAPT at Ser-396. Interacts with PIN1. Interacts with LRRK2. Interacts with LRP1, leading to endocytosis; this interaction is reduced in the presence of LRPAP1/RAP. In terms of processing, polyubiquitinated. Requires functional TRAF6 and may provoke SQSTM1-dependent degradation by the proteasome. Phosphorylation at various serine and threonine residues in S-P or T-P motifs by proline-directed protein kinases (PDPK1, CDK1, CDK5, GSK3, MAPK) (a few sites per protein in interphase, more in mitosis), and at serine residues in K-X-G-S motifs by MAP/microtubule affinity-regulating kinase (MARK1, MARK2, MARK3 or MARK4), causing detachment from microtubules, and their disassembly. Phosphorylation at Ser-597 by BRSK1 and BRSK2 in neurons affects ability to bind microtubules and plays a role in neuron polarization. Phosphorylated by PHK. Dephosphorylation at several serine and threonine residues by the serine/threonine phosphatase PPP5C. Phosphorylation at Ser-214 by SGK1 mediates microtubule depolymerization and neurite formation in hippocampal neurons.

It localises to the cytoplasm. Its subcellular location is the cytosol. It is found in the cell membrane. The protein localises to the cytoskeleton. The protein resides in the cell projection. It localises to the axon. Its subcellular location is the dendrite. Promotes microtubule assembly and stability, and might be involved in the establishment and maintenance of neuronal polarity. The C-terminus binds axonal microtubules while the N-terminus binds neural plasma membrane components, suggesting that tau functions as a linker protein between both. Axonal polarity is predetermined by tau localization (in the neuronal cell) in the domain of the cell body defined by the centrosome. The short isoforms allow plasticity of the cytoskeleton whereas the longer isoforms may preferentially play a role in its stabilization. The polypeptide is Microtubule-associated protein tau (MAPT) (Pan troglodytes (Chimpanzee)).